The primary structure comprises 98 residues: uncharacterized protein (98 aa).

The protein localises to the cytoplasm. This is an uncharacterized protein from Saccharomyces cerevisiae (strain ATCC 204508 / S288c) (Baker's yeast).